Here is a 312-residue protein sequence, read N- to C-terminus: Methionyl-tRNA formyltransferase (312 aa).

Position 107–110 (107–110) interacts with (6S)-5,6,7,8-tetrahydrofolate; the sequence is SLLP.

This sequence belongs to the Fmt family.

It catalyses the reaction L-methionyl-tRNA(fMet) + (6R)-10-formyltetrahydrofolate = N-formyl-L-methionyl-tRNA(fMet) + (6S)-5,6,7,8-tetrahydrofolate + H(+). In terms of biological role, attaches a formyl group to the free amino group of methionyl-tRNA(fMet). The formyl group appears to play a dual role in the initiator identity of N-formylmethionyl-tRNA by promoting its recognition by IF2 and preventing the misappropriation of this tRNA by the elongation apparatus. The sequence is that of Methionyl-tRNA formyltransferase from Borreliella burgdorferi (strain ZS7) (Borrelia burgdorferi).